The primary structure comprises 461 residues: Nuclear distribution protein PAC1 (461 aa).

One can recognise a LisH domain in the interval 9–41 (QAEELHKAIIAYLSANNLSSSATALRTELGLAE). Positions 61-88 (TSVVRLQKKIMDLESRNNALQSELDNAT) form a coiled coil. WD repeat units follow at residues 114 to 155 (SHQN…RTIK), 157 to 197 (HTRP…KNIR), 201 to 248 (GHDH…CLKT), 251 to 290 (GHTAWIRDVYPSLDGRYLLSTGDDSTVRLWDLSVTNPENR), 295 to 355 (GHDH…LKTL), 357 to 396 (GHDNWVRALVFHPGGRYLLSVSDDKTLRCWDLEQDGKCVK), 401 to 444 (VHER…VRIR), and 446 to 461 (VIATGSVDMKLRIFAN).

This sequence belongs to the WD repeat LIS1/nudF family. In terms of assembly, self-associates. Interacts with NDL1 and dynein.

The protein resides in the cytoplasm. The protein localises to the cytoskeleton. It localises to the spindle pole. Its function is as follows. Positively regulates the activity of the minus-end directed microtubule motor protein dynein. May enhance dynein-mediated microtubule sliding by targeting dynein to the microtubule plus end. Required for nuclear migration during vegetative growth as well as development. Required for retrograde early endosome (EE) transport from the hyphal tip. Required for localization of dynein to the mitotic spindle poles. Recruits additional proteins to the dynein complex at SPBs. The polypeptide is Nuclear distribution protein PAC1 (Pyricularia oryzae (strain 70-15 / ATCC MYA-4617 / FGSC 8958) (Rice blast fungus)).